Here is a 141-residue protein sequence, read N- to C-terminus: Small ribosomal subunit protein uS12 (141 aa).

A 3-methylthioaspartic acid modification is found at Asp89. Residues 104–141 are disordered; it reads ASGAVGPSNTNKLNRNVSRSKYGVKRPKAGAKPASKAK. Positions 110-122 are enriched in polar residues; it reads PSNTNKLNRNVSR. Over residues 125–141 the composition is skewed to basic residues; sequence YGVKRPKAGAKPASKAK.

Belongs to the universal ribosomal protein uS12 family. As to quaternary structure, part of the 30S ribosomal subunit. Contacts proteins S8 and S17. May interact with IF1 in the 30S initiation complex.

Functionally, with S4 and S5 plays an important role in translational accuracy. Interacts with and stabilizes bases of the 16S rRNA that are involved in tRNA selection in the A site and with the mRNA backbone. Located at the interface of the 30S and 50S subunits, it traverses the body of the 30S subunit contacting proteins on the other side and probably holding the rRNA structure together. The combined cluster of proteins S8, S12 and S17 appears to hold together the shoulder and platform of the 30S subunit. This Methylacidiphilum infernorum (isolate V4) (Methylokorus infernorum (strain V4)) protein is Small ribosomal subunit protein uS12.